Consider the following 394-residue polypeptide: Upstream-binding factor 1-like protein 1 (394 aa).

A DNA-binding region (HMG box 1) is located at residues 101–169 (PKRPLTAYLR…DFQKKMRQFK (69 aa)). The span at 167–180 (QFKKRHPVSGHPKK) shows a compositional bias: basic residues. Residues 167–197 (QFKKRHPVSGHPKKSVVPQSHPTKVPTKSQG) form a disordered region. Polar residues predominate over residues 183–197 (VPQSHPTKVPTKSQG). Positions 225-291 (RKPPMNAYHK…QYRVKLDLWL (67 aa)) form a DNA-binding region, HMG box 2. A disordered region spans residues 305-394 (AKATCGKRKN…SDSSSTDEDD (90 aa)).

It is found in the cytoplasm. Its subcellular location is the nucleus. Its function is as follows. Essential for proliferation of the inner cell mass and trophectodermal cells in peri-implantation development. This chain is Upstream-binding factor 1-like protein 1, found in Mus musculus (Mouse).